A 149-amino-acid polypeptide reads, in one-letter code: uncharacterized protein (149 aa).

The region spanning 2 to 146 (LEVKTISVED…NHIVMYKTLR (145 aa)) is the N-acetyltransferase domain.

It belongs to the acetyltransferase family.

This is an uncharacterized protein from Bacillus subtilis (strain 168).